The primary structure comprises 331 residues: Protein RecA (331 aa).

66 to 73 (GPESSGKT) provides a ligand contact to ATP.

This sequence belongs to the RecA family.

It is found in the cytoplasm. Its function is as follows. Can catalyze the hydrolysis of ATP in the presence of single-stranded DNA, the ATP-dependent uptake of single-stranded DNA by duplex DNA, and the ATP-dependent hybridization of homologous single-stranded DNAs. It interacts with LexA causing its activation and leading to its autocatalytic cleavage. This Lactobacillus delbrueckii subsp. bulgaricus (strain ATCC 11842 / DSM 20081 / BCRC 10696 / JCM 1002 / NBRC 13953 / NCIMB 11778 / NCTC 12712 / WDCM 00102 / Lb 14) protein is Protein RecA.